Reading from the N-terminus, the 458-residue chain is MNRIRIHVLPTNRGRITPVPRSQEPLSCSFTHRPCSQPRLEGQEFCIKHILEDKNAPFKQCSYVSTKNGKRCPSAAPKPEKKDGASFCAEHARRNALALHAQMKKTSPGPVGETLLCQLSSYAKTELGSQTPESSRSEASRILDEDSWSDGDQEPITVDQTWRGDPDSEADSIDSDQEDPLKHAGVYTAEEVALIMREKLIRLQSLYIDQFKRLQHLLKEKKRRYLHNRKVEHEALGSSLLTGPEGLLAKERENLKRLKCLRRYRQRYGVEALLHRQLKERRMLATDGAAQQAHTTRSSQRCLAFVDDVRCSNQSLPMTRHCLTHICQDTNQVLFKCCQGSEEVPCNKPVPVSLSEDPCCPLHFQLPPQMYKPEQDLDVVGDGMQCPPSPLLFDPSLTLEDHPVKEIAEGPVDILGQMQMAGDGCRSQGPRNSEKAPAPLPQSGIATANGKPEPTSVS.

A Glycyl lysine isopeptide (Lys-Gly) (interchain with G-Cter in SUMO2) cross-link involves residue Lys78. The segment at 126–182 (ELGSQTPESSRSEASRILDEDSWSDGDQEPITVDQTWRGDPDSEADSIDSDQEDPLK) is disordered. Thr131 carries the phosphothreonine modification. The span at 135 to 144 (SRSEASRILD) shows a compositional bias: basic and acidic residues. A phosphoserine mark is found at Ser147, Ser149, Ser168, Ser172, and Ser175. Acidic residues predominate over residues 167-178 (DSEADSIDSDQE). Positions 308-364 (DVRCSNQSLPMTRHCLTHICQDTNQVLFKCCQGSEEVPCNKPVPVSLSEDPCCPLHF) are required for interaction with other NSL complex members. The segment at 419–458 (QMAGDGCRSQGPRNSEKAPAPLPQSGIATANGKPEPTSVS) is disordered.

Component of the NSL complex at least composed of KAT8/MOF, KANSL1, KANSL2, KANSL3, MCRS1, PHF20, OGT1/OGT, WDR5 and HCFC1.

It localises to the nucleus. It is found in the mitochondrion. In terms of biological role, non-catalytic component of the NSL histone acetyltransferase complex, a multiprotein complex that mediates histone H4 acetylation at 'Lys-5'- and 'Lys-8' (H4K5ac and H4K8ac) at transcription start sites and promotes transcription initiation. Required for NSL complex stability and for transcription of intraciliary transport genes in both ciliated and non-ciliated cells by regulating histone H4 acetylation at 'Lys-5'- and 'Lys-12' (H4K5ac and H4K12ac). This is necessary for cilium assembly in ciliated cells and for organization of the microtubule cytoskeleton in non-ciliated cells. Required within the NSL complex to maintain nuclear architecture stability by promoting KAT8-mediated acetylation of lamin LMNA. This chain is KAT8 regulatory NSL complex subunit 2 (KANSL2), found in Bos taurus (Bovine).